Reading from the N-terminus, the 178-residue chain is Histone H3-like centromeric protein CENH3 (178 aa).

A disordered region spans residues 1-81; the sequence is MARTKHRVTR…GSQKKSYRYR (81 aa). At Lys5 the chain carries N6,N6,N6-trimethyllysine; alternate. N6,N6-dimethyllysine; alternate is present on Lys5. Lys5 carries the N6-methyllysine; alternate modification. Position 11 is a phosphoserine (Ser11). Over residues 16–36 the composition is skewed to low complexity; it reads QTDAAGASSSQAAGPTTTPTR. A compositionally biased stretch (polar residues) spans 43 to 56; the sequence is DNTQQTNPTTSPAT. An N6-methyllysine; alternate mark is found at Lys63 and Lys75. Lys63 is subject to N6-acetyllysine; alternate. At Lys75 the chain carries N6,N6,N6-trimethyllysine; alternate. Lys75 carries the post-translational modification N6,N6-dimethyllysine; alternate.

It belongs to the histone H3 family. In terms of assembly, forms a nucleosome-like histone octamer containing two molecules each of H2A, H2B, CENH3 and H4 assembled in one CENH3-H4 heterotetramer and two H2A-H2B heterodimers. Interacts with ORTH2.

The protein resides in the chromosome. Its subcellular location is the centromere. The protein localises to the kinetochore. Functionally, histone H3-like variant which exclusively replaces conventional H3 in the nucleosome core of centromeric chromatin at the inner plate of the kinetochore. Required for recruitment and assembly of kinetochore proteins, mitotic progression and chromosome segregation. May serve as an epigenetic mark that propagates centromere identity through replication and cell division. This is Histone H3-like centromeric protein CENH3 from Arabidopsis thaliana (Mouse-ear cress).